Here is a 559-residue protein sequence, read N- to C-terminus: BTB/POZ domain-containing protein At5g47800 (559 aa).

The 69-residue stretch at 28 to 96 folds into the BTB domain; that stretch reads NDLVIRINNT…CYDITINLSA (69 aa). One can recognise an NPH3 domain in the interval 199–476; it reads DWWTEDISDL…VQALFFDQES (278 aa). Tyrosine 417 is modified (phosphotyrosine). Residues 477-489 are compositionally biased toward low complexity; sequence GSKGASSRSESQE. Disordered regions lie at residues 477 to 502 and 524 to 559; these read GSKG…TDEH and EGCK…SRDR. Composition is skewed to basic and acidic residues over residues 492 to 502 and 524 to 541; these read TRGKETPTDEH and EGCK…DPKK.

This sequence belongs to the NPH3 family.

It functions in the pathway protein modification; protein ubiquitination. Functionally, may act as a substrate-specific adapter of an E3 ubiquitin-protein ligase complex (CUL3-RBX1-BTB) which mediates the ubiquitination and subsequent proteasomal degradation of target proteins. This chain is BTB/POZ domain-containing protein At5g47800, found in Arabidopsis thaliana (Mouse-ear cress).